The primary structure comprises 134 residues: Protein NrdI (134 aa).

Belongs to the NrdI family.

Its function is as follows. Probably involved in ribonucleotide reductase function. This is Protein NrdI from Rhizobium leguminosarum bv. trifolii (strain WSM2304).